Reading from the N-terminus, the 597-residue chain is Gigaxonin (597 aa).

Residues 30–99 enclose the BTB domain; it reads CDAHLVLDGE…IFSGQIRLNE (70 aa). The BACK domain occupies 134–236; sequence CIGIRDFALH…DSSYLREQML (103 aa). 6 Kelch repeats span residues 274 to 326, 327 to 374, 376 to 421, 422 to 468, 470 to 522, and 528 to 574; these read CIVT…SAEG, FLFV…EIDG, LYIL…AMKK, KIYA…GVAM, LYVF…VYGA, and SIYV…AALR.

As to quaternary structure, interacts with TBCB. Interacts with CUL3. Part of a complex that contains CUL3, RBX1 and GAN. Interacts (via BTB domain) with UBA1. Interacts (via Kelch domains) with MAP1B (via C-terminus) and MAP1S (via C-terminus). Ubiquitinated by E3 ubiquitin ligase complex formed by CUL3 and RBX1 and probably targeted for proteasome-independent degradation. As to expression, expressed in brain, heart and muscle.

The protein localises to the cytoplasm. It localises to the cytoskeleton. The protein operates within protein modification; protein ubiquitination. Functionally, probable cytoskeletal component that directly or indirectly plays an important role in neurofilament architecture. May act as a substrate-specific adapter of an E3 ubiquitin-protein ligase complex which mediates the ubiquitination and subsequent proteasomal degradation of target proteins. Controls degradation of TBCB. Controls degradation of MAP1B and MAP1S, and is critical for neuronal maintenance and survival. The protein is Gigaxonin (GAN) of Homo sapiens (Human).